Here is a 620-residue protein sequence, read N- to C-terminus: 1-deoxy-D-xylulose-5-phosphate synthase (620 aa).

Thiamine diphosphate contacts are provided by residues H80 and 121 to 123 (GHS). D152 is a binding site for Mg(2+). Residues 153–154 (GA), N181, Y288, and E370 contribute to the thiamine diphosphate site. N181 provides a ligand contact to Mg(2+).

It belongs to the transketolase family. DXPS subfamily. Homodimer. Mg(2+) serves as cofactor. Requires thiamine diphosphate as cofactor.

The enzyme catalyses D-glyceraldehyde 3-phosphate + pyruvate + H(+) = 1-deoxy-D-xylulose 5-phosphate + CO2. It functions in the pathway metabolic intermediate biosynthesis; 1-deoxy-D-xylulose 5-phosphate biosynthesis; 1-deoxy-D-xylulose 5-phosphate from D-glyceraldehyde 3-phosphate and pyruvate: step 1/1. In terms of biological role, catalyzes the acyloin condensation reaction between C atoms 2 and 3 of pyruvate and glyceraldehyde 3-phosphate to yield 1-deoxy-D-xylulose-5-phosphate (DXP). This Salmonella heidelberg (strain SL476) protein is 1-deoxy-D-xylulose-5-phosphate synthase.